We begin with the raw amino-acid sequence, 144 residues long: Universal stress protein F (144 aa).

Belongs to the universal stress protein A family. Homodimer.

This chain is Universal stress protein F (uspF), found in Escherichia coli O157:H7.